The sequence spans 294 residues: 3-methyl-2-oxobutanoate hydroxymethyltransferase (294 aa).

The span at 1–12 (MSASAESTNATP) shows a compositional bias: polar residues. The interval 1-21 (MSASAESTNATPYGTLPPTAA) is disordered. Mg(2+) is bound by residues D69 and D112. Residues 69–70 (DS), D112, and K141 each bind 3-methyl-2-oxobutanoate. Mg(2+) is bound at residue E143. E210 (proton acceptor) is an active-site residue.

It belongs to the PanB family. As to quaternary structure, homodecamer; pentamer of dimers. Mg(2+) serves as cofactor.

It is found in the cytoplasm. The catalysed reaction is 3-methyl-2-oxobutanoate + (6R)-5,10-methylene-5,6,7,8-tetrahydrofolate + H2O = 2-dehydropantoate + (6S)-5,6,7,8-tetrahydrofolate. It functions in the pathway cofactor biosynthesis; (R)-pantothenate biosynthesis; (R)-pantoate from 3-methyl-2-oxobutanoate: step 1/2. Functionally, catalyzes the reversible reaction in which hydroxymethyl group from 5,10-methylenetetrahydrofolate is transferred onto alpha-ketoisovalerate to form ketopantoate. In Albidiferax ferrireducens (strain ATCC BAA-621 / DSM 15236 / T118) (Rhodoferax ferrireducens), this protein is 3-methyl-2-oxobutanoate hydroxymethyltransferase.